A 206-amino-acid polypeptide reads, in one-letter code: Type III pantothenate kinase (206 aa).

5–12 serves as a coordination point for ATP; it reads DIGNSTAK. Residues Y67 and 72–75 each bind substrate; that span reads GVDR. The active-site Proton acceptor is the D74. Residue D89 participates in K(+) binding. An ATP-binding site is contributed by S92. T144 contributes to the substrate binding site.

This sequence belongs to the type III pantothenate kinase family. As to quaternary structure, homodimer. It depends on NH4(+) as a cofactor. The cofactor is K(+).

It localises to the cytoplasm. The catalysed reaction is (R)-pantothenate + ATP = (R)-4'-phosphopantothenate + ADP + H(+). It functions in the pathway cofactor biosynthesis; coenzyme A biosynthesis; CoA from (R)-pantothenate: step 1/5. Functionally, catalyzes the phosphorylation of pantothenate (Pan), the first step in CoA biosynthesis. This chain is Type III pantothenate kinase, found in Campylobacter hominis (strain ATCC BAA-381 / DSM 21671 / CCUG 45161 / LMG 19568 / NCTC 13146 / CH001A).